Reading from the N-terminus, the 250-residue chain is Probable septum site-determining protein MinC (250 aa).

Residues 110–143 (SGARERPLEPEPEVVKKPEPAPAPPPPPEPEVRP) are disordered. Basic and acidic residues predominate over residues 112-128 (ARERPLEPEPEVVKKPE). Residues 129-138 (PAPAPPPPPE) are compositionally biased toward pro residues.

Belongs to the MinC family. Interacts with MinD and FtsZ.

In terms of biological role, cell division inhibitor that blocks the formation of polar Z ring septums. Rapidly oscillates between the poles of the cell to destabilize FtsZ filaments that have formed before they mature into polar Z rings. Prevents FtsZ polymerization. The polypeptide is Probable septum site-determining protein MinC (Pseudomonas putida (strain ATCC 47054 / DSM 6125 / CFBP 8728 / NCIMB 11950 / KT2440)).